A 386-amino-acid chain; its full sequence is 26S proteasome non-ATPase regulatory subunit 13 homolog A (386 aa).

Residue A2 is modified to N-acetylalanine. Residues 173–347 form the PCI domain; the sequence is EFSDFYKSAL…GTIYVSWAQP (175 aa).

This sequence belongs to the proteasome subunit S11 family. In terms of assembly, component of the 19S regulatory particle (RP/PA700) lid subcomplex of the 26S proteasome. The 26S proteasome is composed of a core protease (CP), known as the 20S proteasome, capped at one or both ends by the 19S regulatory particle (RP/PA700). The RP/PA700 complex is composed of at least 17 different subunits in two subcomplexes, the base and the lid, which form the portions proximal and distal to the 20S proteolytic core, respectively. Ubiquitous with highest expression in flowers.

Its function is as follows. Acts as a regulatory subunit of the 26S proteasome which is involved in the ATP-dependent degradation of ubiquitinated proteins. This is 26S proteasome non-ATPase regulatory subunit 13 homolog A (RPN9A) from Arabidopsis thaliana (Mouse-ear cress).